Here is a 37-residue protein sequence, read N- to C-terminus: Potassium channel toxin alpha-KTx 11.2 (37 aa).

Disulfide bonds link Cys8–Cys27, Cys13–Cys33, and Cys17–Cys35.

Belongs to the short scorpion toxin superfamily. Potassium channel inhibitor family. Alpha-KTx 11 subfamily. As to expression, expressed by the venom gland.

The protein resides in the secreted. In terms of biological role, binds and inhibits voltage-sensitive potassium channels. Inhibits the vertebrate potassium channel Kv1.1/KCNA1 with low affinity. In Parabuthus villosus (Black hairy thick-tailed scorpion), this protein is Potassium channel toxin alpha-KTx 11.2.